A 241-amino-acid polypeptide reads, in one-letter code: NLP effector protein 7 (241 aa).

The first 19 residues, 1–19 (MHLCALLIAAAGVLASVRA), serve as a signal peptide directing secretion. The Conserved undecapeptide motif signature appears at 105–115 (AIMYAWYFPKA). Residues 125–131 (GSRHYWL) carry the Conserved heptapeptide motif motif. Residue Asn144 is glycosylated (N-linked (GlcNAc...) asparagine).

The protein belongs to the Necrosis inducing protein (NPP1) family.

It localises to the secreted. Secreted effector that acts as a pathogen-associated molecular pattern (PAMP) recognized by the plant immune system. Induces necrosis in Nicotiana benthamiana leaves and can induce Phytophthora capsici resistance in Nicotiana benthamiana. Also significantly improves disease resistance of Arabidopsis thaliana to Hyaloperonospora arabidopsidis. causes an inhibition of plant growth which is typically associated with enhanced immunity when over-expressed in Arabidopsis. This Plasmopara viticola (Downy mildew of grapevine) protein is NLP effector protein 7.